A 178-amino-acid polypeptide reads, in one-letter code: Gamma-crystallin S (178 aa).

Residue serine 2 is modified to N-acetylserine. An N-terminal arm region spans residues 2–5; sequence SKTG. 2 Beta/gamma crystallin 'Greek key' domains span residues 6–44 and 45–87; these read TKIT…KVEG and GTWA…RAVH. Residues 88–93 form a connecting peptide region; sequence LPSGGQ. Beta/gamma crystallin 'Greek key' domains lie at 94–134 and 135–177; these read YKIQ…KVLE and GVWI…RRIV.

It belongs to the beta/gamma-crystallin family. In terms of assembly, monomer.

Its function is as follows. Crystallins are the dominant structural components of the vertebrate eye lens. In Homo sapiens (Human), this protein is Gamma-crystallin S (CRYGS).